We begin with the raw amino-acid sequence, 199 residues long: MSHHDGENEGTSADSGYDDFVILLDDDGNHIGTAPRATVHSQHTPRHLAFSCHVLDVGGRVLVTRRALTKVAWPGVWTNTCCGHPRVGETIIDAAVRRTHQELGLDLDPRRMRVVLPDFSYRATDSGGIVEDEFCPVVVARLSLPEELVELNPDPDEVEEVAWVGWQDMYDLARSMPALLSPWAVEQMLEFGPDLPVVR.

H40 and H47 together coordinate Mn(2+). In terms of domain architecture, Nudix hydrolase spans 45–186 (PRHLAFSCHV…PALLSPWAVE (142 aa)). The active site involves C82. C82 provides a ligand contact to Mg(2+). Position 84 (H84) interacts with Mn(2+). E102 is a binding site for Mg(2+). E131 and E133 together coordinate Mn(2+). The active site involves E133.

Belongs to the IPP isomerase type 1 family. The cofactor is Mg(2+). Requires Mn(2+) as cofactor.

Its subcellular location is the cytoplasm. It carries out the reaction isopentenyl diphosphate = dimethylallyl diphosphate. Its pathway is isoprenoid biosynthesis; dimethylallyl diphosphate biosynthesis; dimethylallyl diphosphate from isopentenyl diphosphate: step 1/1. Catalyzes the 1,3-allylic rearrangement of the homoallylic substrate isopentenyl (IPP) to its highly electrophilic allylic isomer, dimethylallyl diphosphate (DMAPP). The protein is Isopentenyl-diphosphate Delta-isomerase of Cutibacterium acnes (strain DSM 16379 / KPA171202) (Propionibacterium acnes).